A 1325-amino-acid chain; its full sequence is Protein suppressor of sable (1325 aa).

Disordered regions lie at residues Met1–Gln36 and Val74–Asn326. The span at Pro9–Gln30 shows a compositional bias: acidic residues. Over residues Arg119–Glu131 the composition is skewed to polar residues. Positions Ala138–Arg327 are highly charged. A compositionally biased stretch (basic residues) spans Ser149–Glu158. A coiled-coil region spans residues Ser149–Asp179. Residues Arg159–Asn178 are compositionally biased toward basic and acidic residues. A compositionally biased stretch (gly residues) spans Ala236–Tyr246. A coiled-coil region spans residues Asn276–Glu296. 2 consecutive C3H1-type zinc fingers follow at residues Pro330–Phe357 and Pro358–Pro381. Residues Lys444 to Asp478 are a coiled coil. Basic and acidic residues predominate over residues Lys499 to Gly509. Disordered regions lie at residues Lys499 to His535, Lys588 to Gly622, Phe639 to Phe695, Ser710 to Gly745, Ala780 to Pro835, Asp979 to Lys1058, Glu1143 to Val1170, and Arg1295 to Ile1325. Ser524 carries the post-translational modification Phosphoserine. Residues Pro594–Pro606 are compositionally biased toward polar residues. A Phosphothreonine modification is found at Thr604. The span at Pro644–Asp668 shows a compositional bias: acidic residues. Residue Ser663 is modified to Phosphoserine. The residue at position 664 (Thr664) is a Phosphothreonine. Residues Ser710–Asn726 are compositionally biased toward polar residues. The span at Ser790 to Ser800 shows a compositional bias: low complexity. Residues Ser1003–Asn1015 show a composition bias toward pro residues. Over residues Pro1021–Arg1033 the composition is skewed to basic and acidic residues. Over residues Gly1042 to Gly1056 the composition is skewed to low complexity. Composition is skewed to gly residues over residues Ala1149–Val1170 and Arg1295–Asn1309.

Belongs to the suppressor of sable family. In terms of assembly, interacts with Wdr82.

Its subcellular location is the nucleus. The protein localises to the chromosome. In terms of biological role, RNA-binding protein that suppresses transcription of some RNAs. Together with Wdr82, part of a transcription termination checkpoint that promotes transcription termination of RNAs and their subsequent degradation by the nuclear exosome. Promotes transcription termination of aberrant RNAs, transcripts from genes containing a transposon inserted at their very 5' end or RNAs from heat-shock-inducible repetitive element. Binds RNA preferentially at a sequence that resembles a cryptic 5'-splice site. This Drosophila melanogaster (Fruit fly) protein is Protein suppressor of sable.